A 121-amino-acid polypeptide reads, in one-letter code: uncharacterized protein (121 aa).

Residues 101 to 121 form a disordered region; the sequence is SIEPTATGSPETRDPDPSAYA. Over residues 111-121 the composition is skewed to basic and acidic residues; sequence ETRDPDPSAYA.

Its subcellular location is the mitochondrion. This is an uncharacterized protein from Arabidopsis thaliana (Mouse-ear cress).